Here is a 472-residue protein sequence, read N- to C-terminus: Uronate isomerase (472 aa).

Belongs to the metallo-dependent hydrolases superfamily. Uronate isomerase family.

The catalysed reaction is D-glucuronate = D-fructuronate. It carries out the reaction aldehydo-D-galacturonate = keto-D-tagaturonate. Its pathway is carbohydrate metabolism; pentose and glucuronate interconversion. The polypeptide is Uronate isomerase (Xanthomonas axonopodis pv. citri (strain 306)).